Here is a 256-residue protein sequence, read N- to C-terminus: Small ribosomal subunit protein eS1 (256 aa).

Residue A2 is modified to N-acetylalanine; partial.

Belongs to the eukaryotic ribosomal protein eS1 family. In terms of assembly, component of the small ribosomal subunit. Mature ribosomes consist of a small (40S) and a large (60S) subunit. The 40S subunit contains about 33 different proteins and 1 molecule of RNA (18S). The 60S subunit contains about 49 different proteins and 3 molecules of RNA (25S, 5.8S and 5S).

It localises to the cytoplasm. This is Small ribosomal subunit protein eS1 (rps1) from Sclerotinia sclerotiorum (strain ATCC 18683 / 1980 / Ss-1) (White mold).